Reading from the N-terminus, the 73-residue chain is Conotoxin ArMKLT2-022 (73 aa).

Residues 1-22 (MKLTCVLIIAVLFLTACQLTTG) form the signal peptide. Positions 23-40 (EQKDHAQRSADRNSKLTR) are excised as a propeptide. Residue Gln-41 is modified to Pyrrolidone carboxylic acid. Disulfide bonds link Cys-42-Cys-56, Cys-49-Cys-60, and Cys-55-Cys-67.

The protein belongs to the conotoxin O1 superfamily. Expressed by the venom duct.

It localises to the secreted. The chain is Conotoxin ArMKLT2-022 from Conus arenatus (Sand-dusted cone).